The following is a 346-amino-acid chain: Selenide, water dikinase (346 aa).

The active site involves selenocysteine 16. Position 16 (selenocysteine 16) is a non-standard amino acid, selenocysteine. Residues lysine 19 and 47-49 (TAD) contribute to the ATP site. Aspartate 50 is a binding site for Mg(2+). ATP contacts are provided by residues aspartate 67, aspartate 90, and 138–140 (GHS). Position 90 (aspartate 90) interacts with Mg(2+). A Mg(2+)-binding site is contributed by aspartate 226.

Belongs to the selenophosphate synthase 1 family. Class I subfamily. In terms of assembly, homodimer. Requires Mg(2+) as cofactor.

It catalyses the reaction hydrogenselenide + ATP + H2O = selenophosphate + AMP + phosphate + 2 H(+). Its function is as follows. Synthesizes selenophosphate from selenide and ATP. This Haemophilus influenzae (strain ATCC 51907 / DSM 11121 / KW20 / Rd) protein is Selenide, water dikinase.